A 122-amino-acid chain; its full sequence is MIVAVGIDVVLVERFTRALARTPLLADRLFTEAERYTRSGNPRSPESLAARFAAKEAVAKALGAPAGLSWHDCEIVPDPDGRPWLTVSGTVAAAAVERGASRWHLSLSHDGGIASAMVVAER.

Residues D8 and E56 each contribute to the Mg(2+) site.

Belongs to the P-Pant transferase superfamily. AcpS family. Mg(2+) serves as cofactor.

The protein localises to the cytoplasm. It carries out the reaction apo-[ACP] + CoA = holo-[ACP] + adenosine 3',5'-bisphosphate + H(+). In terms of biological role, transfers the 4'-phosphopantetheine moiety from coenzyme A to a Ser of acyl-carrier-protein. In Salinispora arenicola (strain CNS-205), this protein is Holo-[acyl-carrier-protein] synthase.